The sequence spans 176 residues: NAD(P)H-quinone oxidoreductase subunit 6, chloroplastic (176 aa).

5 helical membrane passes run F10–P30, P32–L52, A61–M81, L92–M112, and F152–S172.

This sequence belongs to the complex I subunit 6 family. In terms of assembly, NDH is composed of at least 16 different subunits, 5 of which are encoded in the nucleus.

The protein localises to the plastid. It is found in the chloroplast thylakoid membrane. It carries out the reaction a plastoquinone + NADH + (n+1) H(+)(in) = a plastoquinol + NAD(+) + n H(+)(out). The enzyme catalyses a plastoquinone + NADPH + (n+1) H(+)(in) = a plastoquinol + NADP(+) + n H(+)(out). Functionally, NDH shuttles electrons from NAD(P)H:plastoquinone, via FMN and iron-sulfur (Fe-S) centers, to quinones in the photosynthetic chain and possibly in a chloroplast respiratory chain. The immediate electron acceptor for the enzyme in this species is believed to be plastoquinone. Couples the redox reaction to proton translocation, and thus conserves the redox energy in a proton gradient. In Arabidopsis thaliana (Mouse-ear cress), this protein is NAD(P)H-quinone oxidoreductase subunit 6, chloroplastic (ndhG).